The sequence spans 229 residues: 7-cyano-7-deazaguanine synthase (229 aa).

9-19 (LSGGLDSATVL) is a binding site for ATP. Zn(2+) contacts are provided by cysteine 188, cysteine 198, cysteine 201, and cysteine 204.

This sequence belongs to the QueC family. The cofactor is Zn(2+).

The enzyme catalyses 7-carboxy-7-deazaguanine + NH4(+) + ATP = 7-cyano-7-deazaguanine + ADP + phosphate + H2O + H(+). Its pathway is purine metabolism; 7-cyano-7-deazaguanine biosynthesis. In terms of biological role, catalyzes the ATP-dependent conversion of 7-carboxy-7-deazaguanine (CDG) to 7-cyano-7-deazaguanine (preQ(0)). The polypeptide is 7-cyano-7-deazaguanine synthase (Methylobacillus flagellatus (strain ATCC 51484 / DSM 6875 / VKM B-1610 / KT)).